Here is a 478-residue protein sequence, read N- to C-terminus: Serine/threonine-protein phosphatase 2A activator 1 (478 aa).

The disordered stretch occupies residues 359-478 (DPSAIPPPSR…DITTKAPWAK (120 aa)). Low complexity predominate over residues 396–419 (APWATASQSTPPPSTGTAAPWATS).

The protein belongs to the PTPA-type PPIase family.

It is found in the cytoplasm. Its subcellular location is the nucleus. The enzyme catalyses [protein]-peptidylproline (omega=180) = [protein]-peptidylproline (omega=0). In terms of biological role, PPIases accelerate the folding of proteins. It catalyzes the cis-trans isomerization of proline imidic peptide bonds in oligopeptides. Acts as a regulatory subunit for PP2A-like phosphatases modulating their activity or substrate specificity, probably by inducing a conformational change in the catalytic subunit, a direct target of the PPIase. Can reactivate inactive phosphatase PP2A-phosphatase methylesterase complexes (PP2Ai) in presence of ATP and Mg(2+) by dissociating the inactive form from the complex. The chain is Serine/threonine-protein phosphatase 2A activator 1 (rrd1) from Aspergillus oryzae (strain ATCC 42149 / RIB 40) (Yellow koji mold).